We begin with the raw amino-acid sequence, 363 residues long: Phospho-N-acetylmuramoyl-pentapeptide-transferase (363 aa).

The next 10 membrane-spanning stretches (helical) occupy residues 15–33, 82–102, 106–126, 147–167, 183–203, 207–227, 233–253, 260–280, 285–305, and 341–361; these read FTTL…SFIF, NTPT…LLIV, FYSM…IIGF, FILQ…NGYI, IVIF…VNLT, DGLA…EIFI, LIIY…FLKF, IFMG…ISIL, FTLF…IIQV, and IVEN…VLKI.

This sequence belongs to the glycosyltransferase 4 family. MraY subfamily. Mg(2+) is required as a cofactor.

The protein localises to the cell inner membrane. It carries out the reaction UDP-N-acetyl-alpha-D-muramoyl-L-alanyl-gamma-D-glutamyl-meso-2,6-diaminopimeloyl-D-alanyl-D-alanine + di-trans,octa-cis-undecaprenyl phosphate = di-trans,octa-cis-undecaprenyl diphospho-N-acetyl-alpha-D-muramoyl-L-alanyl-D-glutamyl-meso-2,6-diaminopimeloyl-D-alanyl-D-alanine + UMP. It participates in cell wall biogenesis; peptidoglycan biosynthesis. In terms of biological role, catalyzes the initial step of the lipid cycle reactions in the biosynthesis of the cell wall peptidoglycan: transfers peptidoglycan precursor phospho-MurNAc-pentapeptide from UDP-MurNAc-pentapeptide onto the lipid carrier undecaprenyl phosphate, yielding undecaprenyl-pyrophosphoryl-MurNAc-pentapeptide, known as lipid I. This chain is Phospho-N-acetylmuramoyl-pentapeptide-transferase, found in Prochlorococcus marinus (strain MIT 9515).